We begin with the raw amino-acid sequence, 446 residues long: Keratin, type I cytoskeletal 25 (446 aa).

Residues 1-74 are head; it reads MSLRLSSGSR…VNEGGLLSGN (74 aa). The coil 1A stretch occupies residues 75 to 110; that stretch reads EKVTMQNLNDRLASYLDNVQALQEANADLEQKIKGW. The IF rod domain maps to 75 to 390; that stretch reads EKVTMQNLND…LLIGGDEGAC (316 aa). The interval 111-132 is linker 1; that stretch reads YEKFGPGSCRGLDHDYSRYFPI. The tract at residues 133-224 is coil 1B; the sequence is IDDLKNQIIT…KNHKEEMQAL (92 aa). A linker 12 region spans residues 225-247; that stretch reads QCAAGGNVNVEMNAAPGVDLTVL. A coil 2 region spans residues 248–386; sequence LNNMRAEYEA…ETYCLLIGGD (139 aa). Residues 387–446 are tail; sequence EGACKSSSYKSKDYGSGNAGNQIKDPVKAIVVKKVLEEVDQRSKILTTRLHSLEEKSQSN. The residue at position 438 (serine 438) is a Phosphoserine.

The protein belongs to the intermediate filament family. In terms of assembly, heterodimer of a type I and a type II keratin. Heterodimer with type II keratin KRT5 leading to the formation of keratin intermediate filament (KIF) network. Interacts with KRT6A to form filaments.

Its subcellular location is the cytoplasm. Essential for the proper assembly of type I and type II keratin protein complexes and formation of keratin intermediate filaments in the inner root sheath (irs). Plays a role in the cytoskeleton organization. The polypeptide is Keratin, type I cytoskeletal 25 (Mus musculus (Mouse)).